The chain runs to 314 residues: Vomeronasal type-1 receptor 98 (314 aa).

Over 1–19 (MNKDTTMYCSAYIRDVFFC) the chain is Extracellular. A helical membrane pass occupies residues 20 to 40 (EIGVGISANSCLLLFHIFMFI). Residues 41-49 (RGHRPRLTD) are Cytoplasmic-facing. Residues 50–70 (LPIGLMALIHLLMLLLAAYIA) traverse the membrane as a helical segment. Residues 71 to 92 (KDFFMSSGWDDITCKLFIFLHR) are Extracellular-facing. A disulfide bridge links cysteine 84 with cysteine 171. Residues 93–113 (FFRSLSVCATCMLSVFQTIIL) traverse the membrane as a helical segment. Topologically, residues 114 to 133 (CPQSSHLAKFKPNSPYHLSC) are cytoplasmic. The helical transmembrane segment at 134 to 154 (FFIFMSIFYTSISSHILIAAI) threads the bilayer. Residues 155 to 186 (ATQNLTSVNLIYITKSCSFLPMSSSMQRTFST) are Extracellular-facing. Asparagine 158 carries N-linked (GlcNAc...) asparagine glycosylation. A helical transmembrane segment spans residues 187–207 (LLAFRNAFLIGLMGLSTCYMA). Topologically, residues 208–235 (TLLCRHKTRSQRLQNSKLSPKATPEQRA) are cytoplasmic. A helical transmembrane segment spans residues 236–256 (IWTLLMFMSFFLVMSTFDSII). Topologically, residues 257–268 (SYSRTIFQGNPS) are extracellular. Residues 269–289 (LYCAQILVAHSYAVVSPMLVL) form a helical membrane-spanning segment. Topologically, residues 290 to 314 (SNENRLTNPLISMYERIVRLDFLCW) are cytoplasmic.

This sequence belongs to the G-protein coupled receptor 1 family.

It is found in the cell membrane. In terms of biological role, putative pheromone receptor implicated in the regulation of social as well as reproductive behavior. The polypeptide is Vomeronasal type-1 receptor 98 (Vom1r98) (Rattus norvegicus (Rat)).